Reading from the N-terminus, the 365-residue chain is 2-aminoethylphosphonate--pyruvate transaminase (365 aa).

Lys-194 bears the N6-(pyridoxal phosphate)lysine mark.

This sequence belongs to the class-V pyridoxal-phosphate-dependent aminotransferase family. PhnW subfamily. In terms of assembly, homodimer. Requires pyridoxal 5'-phosphate as cofactor.

The enzyme catalyses (2-aminoethyl)phosphonate + pyruvate = phosphonoacetaldehyde + L-alanine. Functionally, involved in phosphonate degradation. The protein is 2-aminoethylphosphonate--pyruvate transaminase of Bacillus cereus (strain ATCC 10987 / NRS 248).